A 79-amino-acid polypeptide reads, in one-letter code: Acyl carrier protein (79 aa).

Residues 2–77 (SEIADKVKKI…DAIDYIEKQK (76 aa)) form the Carrier domain. Position 37 is an O-(pantetheine 4'-phosphoryl)serine (S37).

The protein belongs to the acyl carrier protein (ACP) family. Post-translationally, 4'-phosphopantetheine is transferred from CoA to a specific serine of apo-ACP by AcpS. This modification is essential for activity because fatty acids are bound in thioester linkage to the sulfhydryl of the prosthetic group.

It is found in the cytoplasm. Its pathway is lipid metabolism; fatty acid biosynthesis. Functionally, carrier of the growing fatty acid chain in fatty acid biosynthesis. The chain is Acyl carrier protein from Gluconacetobacter diazotrophicus (strain ATCC 49037 / DSM 5601 / CCUG 37298 / CIP 103539 / LMG 7603 / PAl5).